A 321-amino-acid chain; its full sequence is Altered inheritance of mitochondria protein 18, mitochondrial (321 aa).

The N-terminal 72 residues, 1–72 (MDRGRCANML…LLATSLYYRD (72 aa)), are a transit peptide targeting the mitochondrion.

It belongs to the AIM18/AIM46 family.

Its subcellular location is the mitochondrion. This Saccharomyces cerevisiae (strain AWRI1631) (Baker's yeast) protein is Altered inheritance of mitochondria protein 18, mitochondrial (AIM18).